The following is a 1938-amino-acid chain: Myosin-6 (1938 aa).

Residues 31–80 (DIRTECFVPDDKEEYVKAKIVSREGGKVTAETENGKTVTVKEDQVMQQNP) form the Myosin N-terminal SH3-like domain. The Myosin motor domain occupies 84–779 (DKIEDMAMLT…LLGLLEEMRD (696 aa)). Lys128 bears the N6,N6,N6-trimethyllysine mark. An ATP-binding site is contributed by 177 to 184 (GESGAGKT). Residue Thr378 is modified to Phosphothreonine. The residue at position 416 (Ser416) is a Phosphoserine. Actin-binding regions lie at residues 656–678 (LNKLMTNLRTTHPHFVRCIIPNE) and 758–772 (KFGHTKVFFKAGLLG). The IQ domain occupies 782 to 811 (LSRIITRIQAQARGQLMRIEFKKMVERRDA). Calmodulin-binding stretches follow at residues 789–806 (IQAQARGQLMRIEFKKMV) and 815–832 (IQWNIRAFMGVKNWPWMK). Positions 842 to 1938 (KSAETEKEMA…GAKQKMHDEE (1097 aa)) form a coiled coil. Residues Ser1089 and Ser1138 each carry the phosphoserine modification. Position 1260 is a phosphotyrosine (Tyr1260). The residue at position 1270 (Ser1270) is a Phosphoserine. Phosphothreonine occurs at positions 1276 and 1283. Ser1308 bears the Phosphoserine mark. Residue Tyr1309 is modified to Phosphotyrosine. Residue Thr1310 is modified to Phosphothreonine. Ser1511 carries the phosphoserine modification. Phosphothreonine occurs at positions 1514 and 1680. Positions 1907 to 1938 (AEERADIAESQVNKLRAKSRDIGAKQKMHDEE) are disordered. Positions 1924–1938 (KSRDIGAKQKMHDEE) are enriched in basic and acidic residues.

This sequence belongs to the TRAFAC class myosin-kinesin ATPase superfamily. Myosin family. As to quaternary structure, muscle myosin is a hexameric protein that consists of 2 heavy chain subunits (MHC), 2 alkali light chain subunits (MLC) and 2 regulatory light chain subunits (MLC-2).

The protein localises to the cytoplasm. It localises to the myofibril. Muscle contraction. The protein is Myosin-6 (Myh6) of Rattus norvegicus (Rat).